The following is a 310-amino-acid chain: Coproporphyrin III ferrochelatase (310 aa).

Fe-coproporphyrin III contacts are provided by residues Tyr13, Arg30, 46–47 (RY), Ser54, and Tyr125. Fe(2+) contacts are provided by His181 and Glu262.

Belongs to the ferrochelatase family.

The protein resides in the cytoplasm. The enzyme catalyses Fe-coproporphyrin III + 2 H(+) = coproporphyrin III + Fe(2+). The protein operates within porphyrin-containing compound metabolism; protoheme biosynthesis. Its function is as follows. Involved in coproporphyrin-dependent heme b biosynthesis. Catalyzes the insertion of ferrous iron into coproporphyrin III to form Fe-coproporphyrin III. This is Coproporphyrin III ferrochelatase from Halalkalibacterium halodurans (strain ATCC BAA-125 / DSM 18197 / FERM 7344 / JCM 9153 / C-125) (Bacillus halodurans).